The primary structure comprises 694 residues: PTS system fructose-specific EIIABC component (694 aa).

One can recognise a PTS EIIA type-2 domain in the interval 4–149; that stretch reads PLLSAELFFN…NGLINLIDSF (146 aa). Histidine 68 (tele-phosphohistidine intermediate; for EIIA activity) is an active-site residue. Histidine 68 bears the Phosphohistidine; by HPr mark. Positions 179–275 constitute a PTS EIIB type-2 domain; that stretch reads FVAVTACPTG…PQTVYDQVVK (97 aa). Cysteine 185 acts as the Phosphocysteine intermediate; for EIIB activity in catalysis. Cysteine 185 carries the phosphocysteine; by EIIA modification. Residues 310–687 form the PTS EIIC type-2 domain; sequence IYRAILSGVS…NLLVVRKKTK (378 aa). The next 10 helical transmembrane spans lie at 318–338, 364–384, 390–410, 422–442, 461–481, 502–522, 542–562, 576–596, 602–622, and 655–675; these read VSYM…AFLI, GGLS…FALV, LPGF…IDIV, VSSG…LIIV, ILFI…VINI, LAPL…GGPV, VAMA…AIAA, AAYA…IPFV, IMLA…GAFA, and GVGL…GIII.

It is found in the cell membrane. It catalyses the reaction D-fructose(out) + N(pros)-phospho-L-histidyl-[protein] = D-fructose 1-phosphate(in) + L-histidyl-[protein]. The phosphoenolpyruvate-dependent sugar phosphotransferase system (sugar PTS), a major carbohydrate active transport system, catalyzes the phosphorylation of incoming sugar substrates concomitantly with their translocation across the cell membrane. This system is involved in fructose transport. In Mycoplasma pneumoniae (strain ATCC 29342 / M129 / Subtype 1) (Mycoplasmoides pneumoniae), this protein is PTS system fructose-specific EIIABC component.